Reading from the N-terminus, the 951-residue chain is Plasma membrane ATPase (951 aa).

4 helical membrane passes run 61-81 (FLGF…IMAI), 93-113 (WEDF…SFIE), 243-263 (IGNF…IVMF), and 277-297 (LLVL…SVTM). Residue Asp329 is the 4-aspartylphosphate intermediate of the active site. Mg(2+) contacts are provided by Asp588 and Asp592. The next 6 membrane-spanning stretches (helical) occupy residues 647-667 (IYAV…ALIW), 671-691 (FSPF…MTIS), 709-729 (IFAT…IFFW), 752-772 (EMMS…IFVT), 785-805 (LLLV…AVYA), and 814-834 (GIGW…YFPL).

Belongs to the cation transport ATPase (P-type) (TC 3.A.3) family. Type IIIA subfamily.

It localises to the cell membrane. The catalysed reaction is ATP + H2O + H(+)(in) = ADP + phosphate + 2 H(+)(out). The plasma membrane ATPase of plants and fungi is a hydrogen ion pump. The proton gradient it generates drives the active transport of nutrients by H(+)-symport. The resulting external acidification and/or internal alkinization may mediate growth responses. This chain is Plasma membrane ATPase, found in Oryza sativa subsp. japonica (Rice).